Consider the following 358-residue polypeptide: Low-specificity L-threonine aldolase 1 (358 aa).

Lysine 207 carries the post-translational modification N6-(pyridoxal phosphate)lysine.

The protein belongs to the threonine aldolase family. It depends on pyridoxal 5'-phosphate as a cofactor. Expressed in root tips, seedlings, carpels and seeds.

It carries out the reaction L-threonine = acetaldehyde + glycine. It catalyses the reaction L-allo-threonine = acetaldehyde + glycine. Its pathway is amino-acid degradation; L-threonine degradation via aldolase pathway; acetaldehyde and glycine from L-threonine: step 1/1. In terms of biological role, threonine aldolase involved in threonine degradation to glycine. May play a role in the removal of L-allo-threonine. The sequence is that of Low-specificity L-threonine aldolase 1 from Arabidopsis thaliana (Mouse-ear cress).